The chain runs to 350 residues: MSEQKQSLSYKDAGVDIDAGNALVERIKGVVKKTRRPEVMGGIGGFGALCEIPAGYKQPVLVAGTDGVGTKLRLAIDLKKHDTVGIDLVAMCVNDLIVQGAEPLFFLDYYATGKLDVDTAADVVTGIGKGCEISGCALIGGETAEMPGMYDGEDYDMAGFCTGVVEKSKIIDGTKVAAGDQLIALASSGPHSNGFSLIRKVLEVSNADTSADFEGKTLGETLLEPTRIYVKPLLELFKHVDVHALSHITGGGFWENIPRVLPASAKAVVKGDSWQWPPIFNWLQENGNITTHEMYRTFNCGVGMVLVVPADKLEQSLSMLKDLGENAWHLGEIQDAAPGEEQVEIVGGAK.

Belongs to the AIR synthase family.

The protein localises to the cytoplasm. The enzyme catalyses 2-formamido-N(1)-(5-O-phospho-beta-D-ribosyl)acetamidine + ATP = 5-amino-1-(5-phospho-beta-D-ribosyl)imidazole + ADP + phosphate + H(+). It functions in the pathway purine metabolism; IMP biosynthesis via de novo pathway; 5-amino-1-(5-phospho-D-ribosyl)imidazole from N(2)-formyl-N(1)-(5-phospho-D-ribosyl)glycinamide: step 2/2. This Pseudoalteromonas translucida (strain TAC 125) protein is Phosphoribosylformylglycinamidine cyclo-ligase.